Consider the following 290-residue polypeptide: Sodium/potassium-transporting ATPase subunit beta-2 (290 aa).

Topologically, residues 1–39 (MVIQKEKKSCGQVVEEWKEFVWNPRTHQFMGRTGTSWAF) are cytoplasmic. A helical; Signal-anchor for type II membrane protein transmembrane segment spans residues 40-67 (ILLFYLVFYGFLTAMFTLTMWVMLQTVS). Over 68-290 (DHTPKYQDRL…VAFKLRINKT (223 aa)) the chain is Extracellular. N-linked (GlcNAc...) asparagine glycans are attached at residues asparagine 96 and asparagine 118. Cysteine 129 and cysteine 150 are disulfide-bonded. Asparagine 153 and asparagine 159 each carry an N-linked (GlcNAc...) asparagine glycan. The cysteines at positions 160 and 177 are disulfide-linked. N-linked (GlcNAc...) asparagine glycosylation is found at asparagine 193, asparagine 197, and asparagine 238. Residues 193–290 (NQSMNVTCAG…VAFKLRINKT (98 aa)) are immunoglobulin-like. An intrachain disulfide couples cysteine 200 to cysteine 261.

The protein belongs to the X(+)/potassium ATPases subunit beta family. The sodium/potassium-transporting ATPase is composed of a catalytic alpha subunit, an auxiliary non-catalytic beta subunit and an additional regulatory subunit. Interacts with isoform 2 of BSG.

Its subcellular location is the cell membrane. This is the non-catalytic component of the active enzyme, which catalyzes the hydrolysis of ATP coupled with the exchange of Na(+) and K(+) ions across the plasma membrane. The exact function of the beta-2 subunit is not known. Functionally, mediates cell adhesion of neurons and astrocytes, and promotes neurite outgrowth. This chain is Sodium/potassium-transporting ATPase subunit beta-2 (ATP1B2), found in Homo sapiens (Human).